Here is a 324-residue protein sequence, read N- to C-terminus: N-acetyl-gamma-glutamyl-phosphate reductase (324 aa).

Cys131 is an active-site residue.

Belongs to the NAGSA dehydrogenase family. Type 1 subfamily.

The protein localises to the cytoplasm. The enzyme catalyses N-acetyl-L-glutamate 5-semialdehyde + phosphate + NADP(+) = N-acetyl-L-glutamyl 5-phosphate + NADPH + H(+). Its pathway is amino-acid biosynthesis; L-arginine biosynthesis; N(2)-acetyl-L-ornithine from L-glutamate: step 3/4. Catalyzes the NADPH-dependent reduction of N-acetyl-5-glutamyl phosphate to yield N-acetyl-L-glutamate 5-semialdehyde. The protein is N-acetyl-gamma-glutamyl-phosphate reductase of Bradyrhizobium sp. (strain ORS 278).